The primary structure comprises 142 residues: Large ribosomal subunit protein uL11 (142 aa).

Belongs to the universal ribosomal protein uL11 family. Part of the ribosomal stalk of the 50S ribosomal subunit. Interacts with L10 and the large rRNA to form the base of the stalk. L10 forms an elongated spine to which L12 dimers bind in a sequential fashion forming a multimeric L10(L12)X complex. One or more lysine residues are methylated.

Forms part of the ribosomal stalk which helps the ribosome interact with GTP-bound translation factors. The sequence is that of Large ribosomal subunit protein uL11 from Solibacter usitatus (strain Ellin6076).